Consider the following 507-residue polypeptide: ATP synthase subunit alpha, chloroplastic (507 aa).

Residue 170–177 participates in ATP binding; the sequence is GDRQTGKT.

Belongs to the ATPase alpha/beta chains family. F-type ATPases have 2 components, CF(1) - the catalytic core - and CF(0) - the membrane proton channel. CF(1) has five subunits: alpha(3), beta(3), gamma(1), delta(1), epsilon(1). CF(0) has four main subunits: a, b, b' and c.

It localises to the plastid. The protein resides in the chloroplast thylakoid membrane. The enzyme catalyses ATP + H2O + 4 H(+)(in) = ADP + phosphate + 5 H(+)(out). In terms of biological role, produces ATP from ADP in the presence of a proton gradient across the membrane. The alpha chain is a regulatory subunit. The chain is ATP synthase subunit alpha, chloroplastic from Oryza nivara (Indian wild rice).